The following is a 277-amino-acid chain: MSTSRQQQGRHQGHIARKRFGQNFLVDMGVIDSIVDVIRPQRGERMVEIGPGLGALTEPLIERLATPEAPLHAVELDRDLIGRLKTKFGDLLELHAGDALAFDFGSLAAPGDKASLRIVGNLPYNISSPLLFHLTAFAHCVIDQHFMLQNEVVERMVAEPGTKAFSRLSVMLQYRYVIDKQLDVPPEAFNPPPKVDSAIVRMIPYELHELPPVDERVLGELVTAAFSQRRKMLRNTLAAYRDSVDFEGLGFDLQRRAEDVPVAEYVRVAQIVAASKA.

Residues Asn-23, Leu-25, Gly-50, Glu-75, Asp-98, and Asn-121 each coordinate S-adenosyl-L-methionine.

This sequence belongs to the class I-like SAM-binding methyltransferase superfamily. rRNA adenine N(6)-methyltransferase family. RsmA subfamily.

It is found in the cytoplasm. The catalysed reaction is adenosine(1518)/adenosine(1519) in 16S rRNA + 4 S-adenosyl-L-methionine = N(6)-dimethyladenosine(1518)/N(6)-dimethyladenosine(1519) in 16S rRNA + 4 S-adenosyl-L-homocysteine + 4 H(+). Specifically dimethylates two adjacent adenosines (A1518 and A1519) in the loop of a conserved hairpin near the 3'-end of 16S rRNA in the 30S particle. May play a critical role in biogenesis of 30S subunits. This Paraburkholderia xenovorans (strain LB400) protein is Ribosomal RNA small subunit methyltransferase A.